A 22-amino-acid chain; its full sequence is Myofibril-bound serine protease (22 aa).

Residues 1–22 enclose the Peptidase S1 domain; it reads IVGGYECEAYSKPYQVSINLGY.

Belongs to the peptidase S1 family. In terms of tissue distribution, detected in skeletal muscle (at protein level).

It localises to the cytoplasm. Its function is as follows. Serine protease which degrades the myosin heavy chain and tropomyosin, but not actin. Selectively cleaves Arg-|-Xaa bonds. This chain is Myofibril-bound serine protease, found in Saurida undosquamis (Brushtooth lizardfish).